A 565-amino-acid chain; its full sequence is Thiol:disulfide interchange protein DsbD (565 aa).

Positions 1–19 (MAQRIFTLILLLCSTSVFA) are cleaved as a signal peptide. Over 20–162 (GLFDAPGRSQ…VPQQEQPTAQ (143 aa)) the chain is Periplasmic. 2 disulfide bridges follow: Cys122/Cys128 and Cys182/Cys304. The helical transmembrane segment at 163–183 (LPFSALWALLIGIGIAFTPCV) threads the bilayer. Topologically, residues 184–207 (LPMYPLISGIVLGGKQRLSTARAL) are cytoplasmic. Residues 208 to 228 (LLTFIYVQGMALTYTALGLVV) traverse the membrane as a helical segment. The Periplasmic portion of the chain corresponds to 229-242 (AAAGLQFQAALQHP). A helical transmembrane segment spans residues 243–263 (YVLIGLTIVFTLLAMSMFGLL). The Cytoplasmic segment spans residues 264–295 (TLQLPSSLQTRLTLMSNRQQGGSPGGVFIMGT). A helical transmembrane segment spans residues 296 to 316 (IAGLICSPCTTAPLSAILLYI). Residues 317-322 (AQSGNM) lie on the Periplasmic side of the membrane. A helical transmembrane segment spans residues 323 to 343 (WLGGGTLYLYALGMGLPLMLI). Topologically, residues 344-356 (TVFGNRLLPKSGP) are cytoplasmic. Residues 357 to 377 (WMEQVKTAFGFVILALPVFLL) traverse the membrane as a helical segment. The Periplasmic segment spans residues 378-383 (ERVIGD). Residues 384-404 (VWGLRLWSALGVAFFGWAFIT) traverse the membrane as a helical segment. The Cytoplasmic segment spans residues 405–417 (SLQAKRGWMRVVQ). Residues 418–438 (IILLAAALVSVRPLQDWAFGA) form a helical membrane-spanning segment. The 132-residue stretch at 434 to 565 (WAFGATHTAQ…FSAHLRDRQP (132 aa)) folds into the Thioredoxin domain. Over 439–565 (THTAQTQTHL…FSAHLRDRQP (127 aa)) the chain is Periplasmic. The cysteines at positions 480 and 483 are disulfide-linked.

It belongs to the thioredoxin family. DsbD subfamily.

Its subcellular location is the cell inner membrane. The catalysed reaction is [protein]-dithiol + NAD(+) = [protein]-disulfide + NADH + H(+). It catalyses the reaction [protein]-dithiol + NADP(+) = [protein]-disulfide + NADPH + H(+). Required to facilitate the formation of correct disulfide bonds in some periplasmic proteins and for the assembly of the periplasmic c-type cytochromes. Acts by transferring electrons from cytoplasmic thioredoxin to the periplasm. This transfer involves a cascade of disulfide bond formation and reduction steps. This chain is Thiol:disulfide interchange protein DsbD, found in Escherichia coli O157:H7.